We begin with the raw amino-acid sequence, 492 residues long: Glutamyl-tRNA(Gln) amidotransferase subunit A (492 aa).

Residues lysine 80 and serine 155 each act as charge relay system in the active site. Serine 179 (acyl-ester intermediate) is an active-site residue.

The protein belongs to the amidase family. GatA subfamily. Heterotrimer of A, B and C subunits.

The catalysed reaction is L-glutamyl-tRNA(Gln) + L-glutamine + ATP + H2O = L-glutaminyl-tRNA(Gln) + L-glutamate + ADP + phosphate + H(+). In terms of biological role, allows the formation of correctly charged Gln-tRNA(Gln) through the transamidation of misacylated Glu-tRNA(Gln) in organisms which lack glutaminyl-tRNA synthetase. The reaction takes place in the presence of glutamine and ATP through an activated gamma-phospho-Glu-tRNA(Gln). This is Glutamyl-tRNA(Gln) amidotransferase subunit A from Mycobacteroides abscessus (strain ATCC 19977 / DSM 44196 / CCUG 20993 / CIP 104536 / JCM 13569 / NCTC 13031 / TMC 1543 / L948) (Mycobacterium abscessus).